Reading from the N-terminus, the 303-residue chain is N-acetylmuramic acid 6-phosphate etherase (303 aa).

Residues 60 to 223 form the SIS domain; the sequence is ATASLQAGGR…STGVMVKLGK (164 aa). E88 serves as the catalytic Proton donor. E119 is an active-site residue.

It belongs to the GCKR-like family. MurNAc-6-P etherase subfamily. In terms of assembly, homodimer.

The catalysed reaction is N-acetyl-D-muramate 6-phosphate + H2O = N-acetyl-D-glucosamine 6-phosphate + (R)-lactate. It participates in amino-sugar metabolism; 1,6-anhydro-N-acetylmuramate degradation. Its pathway is amino-sugar metabolism; N-acetylmuramate degradation. The protein operates within cell wall biogenesis; peptidoglycan recycling. Specifically catalyzes the cleavage of the D-lactyl ether substituent of MurNAc 6-phosphate, producing GlcNAc 6-phosphate and D-lactate. Together with AnmK, is also required for the utilization of anhydro-N-acetylmuramic acid (anhMurNAc) either imported from the medium or derived from its own cell wall murein, and thus plays a role in cell wall recycling. The sequence is that of N-acetylmuramic acid 6-phosphate etherase from Pectobacterium atrosepticum (strain SCRI 1043 / ATCC BAA-672) (Erwinia carotovora subsp. atroseptica).